The chain runs to 288 residues: Lysosomal thioesterase PPT2-B (288 aa).

A signal peptide spans Met1 to Ser20. The cysteines at positions 95 and 103 are disulfide-linked. Ser97 serves as the catalytic Nucleophile. Asn143 carries an N-linked (GlcNAc...) asparagine glycan. Cys151 and Cys162 are disulfide-bonded. Asn192 carries N-linked (GlcNAc...) asparagine glycosylation. Catalysis depends on residues Asp214 and His269. The N-linked (GlcNAc...) asparagine glycan is linked to Asn275.

Belongs to the palmitoyl-protein thioesterase family.

The protein localises to the lysosome. The catalysed reaction is hexadecanoyl-CoA + H2O = hexadecanoate + CoA + H(+). It catalyses the reaction S-hexadecanoyl-N-acetylcysteamine + H2O = N-acetylcysteamine + hexadecanoate + H(+). Catalyzes the cleavage of thioester bonds from S-palmitoyl-CoA or S-palmitoyl-N-acetylcysteamine (unbranched structures) but does not have activity against palmitoylcysteine or palmitoylated proteins, branched structures or bulky head groups. Conversely, hydrolyzes both long and short chain fatty acyl-CoA substrate. In Xenopus laevis (African clawed frog), this protein is Lysosomal thioesterase PPT2-B (ppt2-b).